The primary structure comprises 238 residues: Type III secretion protein hrcQa (238 aa).

Residues 66 to 238 (DAEALLSLLG…SHEEHSHHEY (173 aa)) are hrcQa-C.

As to quaternary structure, interacts with hrcQb.

The protein localises to the cell inner membrane. Its function is as follows. Component of the type III secretion system, which is required for effector protein delivery, parasitism, and pathogenicity. Probably participates in the formation of a C-ring-like assembly along with hrcQb. In Pseudomonas syringae pv. syringae, this protein is Type III secretion protein hrcQa (hrcQa).